A 732-amino-acid chain; its full sequence is MDAKTDDKAGKCPVAHGPAPRGNRDWWPEQLNLSMLHQRSPSADPLGKDFHYAEQFKTLDLKALKQDLTALMTESQDWWPADFGHYGGLFIRMAWHSAGTYRTTDGRGGAGAGQQRFAPLNSWPDNANLDKARRLLWPIKQKYGQKISWADLYVLAGNVALESMGFQTFGFAGGRADTWEPEELFWGPEGTWLGDERYSGERQLADPLGAVQMGLIYVNPEGPNGNPDPLGSAKDIRETFARMAMNDEETVALIAGGHTFGKTHGAGDPSLLGPEPEGGDVEDQGLGWKSKYGTGFGADAITGGPEVIWSQEPTKWSNHFFDNLFKFEWELTKSPAGAQQWVAKNAEPSVPDPFDPSKKRLPTMLTSDLALRFDPIYEKISRRFYENPDEFADAFARAWFKLTHRDMGPVARYLGPEVPKETLLWQDPIPPVDHELINDADVEALKAKILGSGLSVADLVSTAWNSASTFRGSDKRGGANGARIRLAPQKDWEVNQPEQLATVLQKLEAIGKEFGKKVSLADLIVLGGVAAIEKAAKDAGVAVKVPFSPGRMDASQEQTDAPSFAPLEPRADGFRNYINSKKHQFMKPEEALVDRAQLLTLTAPEMTVLVGGLRVLGANAGDSKHGVFTTKPGTLSNDFFVNLLTMATSWQPSGTEGIYEGRDRKSGEVKWTATRVDLIFGSHSQLRALAEVYAQADSKEKFVNDFVAAWTKVMNADRFDLIAEPVLLEAAE.

The segment covering 1 to 10 has biased composition (basic and acidic residues); sequence MDAKTDDKAG. The tract at residues 1-26 is disordered; the sequence is MDAKTDDKAGKCPVAHGPAPRGNRDW. A cross-link (tryptophyl-tyrosyl-methioninium (Trp-Tyr) (with M-243)) is located at residues 95-217; sequence WHSAGTYRTT…LGAVQMGLIY (123 aa). Histidine 96 serves as the catalytic Proton acceptor. Positions 217-243 form a cross-link, tryptophyl-tyrosyl-methioninium (Tyr-Met) (with W-95); sequence YVNPEGPNGNPDPLGSAKDIRETFARM. Histidine 258 provides a ligand contact to heme b.

Belongs to the peroxidase family. Peroxidase/catalase subfamily. As to quaternary structure, homodimer or homotetramer. It depends on heme b as a cofactor. In terms of processing, formation of the three residue Trp-Tyr-Met cross-link is important for the catalase, but not the peroxidase activity of the enzyme.

The catalysed reaction is H2O2 + AH2 = A + 2 H2O. It catalyses the reaction 2 H2O2 = O2 + 2 H2O. Functionally, bifunctional enzyme with both catalase and broad-spectrum peroxidase activity. The sequence is that of Catalase-peroxidase from Rhodopseudomonas palustris (strain BisB18).